A 205-amino-acid polypeptide reads, in one-letter code: MIGYLEGTLLKKKEDRILLLAGPVGYEVLLPAVVMASLQGKREGDPLFFHIYHYQTERQPKPVLIGFNTEEEKDFFHLLITVEAIGPLKAVQCLTLPIGEVAEAIETGNSALLGQLKGVGGRTAQKMIATLKGKVGRFADAGHSSAPDVPVTGSLADQTVEVLVGQLGYKPNEARLMVAGALKRNPDVSTPEALFDEIFKHGQAQ.

Residues 1 to 68 are domain I; it reads MIGYLEGTLL…QPKPVLIGFN (68 aa). The tract at residues 69 to 146 is domain II; that stretch reads TEEEKDFFHL…RFADAGHSSA (78 aa). The tract at residues 147–151 is flexible linker; the sequence is PDVPV. Positions 152 to 205 are domain III; that stretch reads TGSLADQTVEVLVGQLGYKPNEARLMVAGALKRNPDVSTPEALFDEIFKHGQAQ.

This sequence belongs to the RuvA family. Homotetramer. Forms an RuvA(8)-RuvB(12)-Holliday junction (HJ) complex. HJ DNA is sandwiched between 2 RuvA tetramers; dsDNA enters through RuvA and exits via RuvB. An RuvB hexamer assembles on each DNA strand where it exits the tetramer. Each RuvB hexamer is contacted by two RuvA subunits (via domain III) on 2 adjacent RuvB subunits; this complex drives branch migration. In the full resolvosome a probable DNA-RuvA(4)-RuvB(12)-RuvC(2) complex forms which resolves the HJ.

It is found in the cytoplasm. The RuvA-RuvB-RuvC complex processes Holliday junction (HJ) DNA during genetic recombination and DNA repair, while the RuvA-RuvB complex plays an important role in the rescue of blocked DNA replication forks via replication fork reversal (RFR). RuvA specifically binds to HJ cruciform DNA, conferring on it an open structure. The RuvB hexamer acts as an ATP-dependent pump, pulling dsDNA into and through the RuvAB complex. HJ branch migration allows RuvC to scan DNA until it finds its consensus sequence, where it cleaves and resolves the cruciform DNA. The sequence is that of Holliday junction branch migration complex subunit RuvA from Desulfosudis oleivorans (strain DSM 6200 / JCM 39069 / Hxd3) (Desulfococcus oleovorans).